The following is a 307-amino-acid chain: Taste receptor type 2 member 10 (307 aa).

The Extracellular portion of the chain corresponds to 1-6; sequence MLRVVE. The chain crosses the membrane as a helical span at residues 7 to 27; sequence GIFIFVVISESVFGVLGNGFI. Topologically, residues 28–42 are cytoplasmic; it reads GLVNCIDCAKNKLST. The chain crosses the membrane as a helical span at residues 43–63; it reads IGFILTGLAISRIFLIWIIIT. The Extracellular segment spans residues 64-100; sequence DGFIQIFSPNIYASSNLIEYISYFWVIGNQSSMWFAT. Residues 101 to 121 traverse the membrane as a helical segment; it reads SLSIFYFLKIANFSNYIFLWL. Residues 122–126 lie on the Cytoplasmic side of the membrane; it reads KSRTN. Residues 127 to 147 form a helical membrane-spanning segment; the sequence is MVLPFMIVFLLISSLLNFAYI. Topologically, residues 148 to 179 are extracellular; sequence AKILNDYKMKNDTVWDLNMYKSEYFIKQILLN. Residue Asn158 is glycosylated (N-linked (GlcNAc...) asparagine). A helical transmembrane segment spans residues 180-200; it reads LGVIFFFTLSLITCVLLIISL. Residues 201–227 are Cytoplasmic-facing; the sequence is WRHNRQMQSNVTGLRDSNTEAHVKAMK. Residues 228-248 form a helical membrane-spanning segment; the sequence is VLISFIILFILYFIGMAIEIS. Residues 249–257 are Extracellular-facing; that stretch reads YFTVRENKL. The helical transmembrane segment at 258–278 threads the bilayer; that stretch reads LLMFGMTTTAIYPWGHSFILI. Over 279–307 the chain is Cytoplasmic; it reads LGNSKLKQASLRVLQQLKCCEKRKNLRVT.

Belongs to the G-protein coupled receptor T2R family.

Its subcellular location is the membrane. Functionally, receptor that may play a role in the perception of bitterness and is gustducin-linked. May play a role in sensing the chemical composition of the gastrointestinal content. The activity of this receptor may stimulate alpha gustducin, mediate PLC-beta-2 activation and lead to the gating of TRPM5. The sequence is that of Taste receptor type 2 member 10 (TAS2R10) from Pan paniscus (Pygmy chimpanzee).